The primary structure comprises 271 residues: Fatty acid elongase A (271 aa).

The next 7 membrane-spanning stretches (helical) occupy residues Ile35–Phe55, Ala68–Ile88, Ile102–Ser122, Ser139–Leu159, Cys165–Phe185, His198–Tyr220, and Thr237–Val257.

This sequence belongs to the ELO family.

It is found in the membrane. It catalyses the reaction a very-long-chain acyl-CoA + malonyl-CoA + H(+) = a very-long-chain 3-oxoacyl-CoA + CO2 + CoA. Functionally, fatty acid elongase with strict substrate specificity for monounsaturated fatty acids, in particular 16:1 (delta-9) to produce the unusual 18:1 (delta-11) fatty acid. This chain is Fatty acid elongase A (eloA), found in Dictyostelium discoideum (Social amoeba).